Reading from the N-terminus, the 85-residue chain is Cell division topological specificity factor (85 aa).

This sequence belongs to the MinE family.

In terms of biological role, prevents the cell division inhibition by proteins MinC and MinD at internal division sites while permitting inhibition at polar sites. This ensures cell division at the proper site by restricting the formation of a division septum at the midpoint of the long axis of the cell. This Xylella fastidiosa (strain M12) protein is Cell division topological specificity factor.